We begin with the raw amino-acid sequence, 229 residues long: Dephospho-CoA kinase domain-containing protein (229 aa).

A DPCK domain is found at 3–207 (LVGLTGGIAS…DCMQFLIIRA (205 aa)). Residue 8 to 15 (GGIASGKS) participates in ATP binding.

This sequence belongs to the CoaE family.

This is Dephospho-CoA kinase domain-containing protein (dcakd) from Danio rerio (Zebrafish).